We begin with the raw amino-acid sequence, 648 residues long: Biosynthetic arginine decarboxylase (648 aa).

Residue Lys109 is modified to N6-(pyridoxal phosphate)lysine. 291-301 is a substrate binding site; sequence LDVGGGLGVDY.

It belongs to the Orn/Lys/Arg decarboxylase class-II family. SpeA subfamily. Mg(2+) serves as cofactor. Pyridoxal 5'-phosphate is required as a cofactor.

It carries out the reaction L-arginine + H(+) = agmatine + CO2. In terms of biological role, catalyzes the biosynthesis of agmatine from arginine. The protein is Biosynthetic arginine decarboxylase of Prochlorococcus marinus (strain MIT 9313).